A 221-amino-acid chain; its full sequence is MNFNVIIDHTLLKPQATSQDIKILIEEAKKYNFGAICIAPIWVKLAKKELKNTNIKIVTVIGFPLGSQISAIKQKEASLAIAHGADEIDMVMNIGKFKEKDFQFIINEINQIKKEIGTKILKVIIETALLSPHEIADATKLVSSTNADFIKTSTGFSYRGASEQDLKIIKENKSEKLAIKAAGGITNLADMENFYRLGATRFGTSKSVSIIKNLTDKKNEY.

D89 (proton donor/acceptor) is an active-site residue. K151 serves as the catalytic Schiff-base intermediate with acetaldehyde. K180 (proton donor/acceptor) is an active-site residue.

Belongs to the DeoC/FbaB aldolase family. DeoC type 1 subfamily.

It is found in the cytoplasm. The catalysed reaction is 2-deoxy-D-ribose 5-phosphate = D-glyceraldehyde 3-phosphate + acetaldehyde. It participates in carbohydrate degradation; 2-deoxy-D-ribose 1-phosphate degradation; D-glyceraldehyde 3-phosphate and acetaldehyde from 2-deoxy-alpha-D-ribose 1-phosphate: step 2/2. Catalyzes a reversible aldol reaction between acetaldehyde and D-glyceraldehyde 3-phosphate to generate 2-deoxy-D-ribose 5-phosphate. This chain is Deoxyribose-phosphate aldolase, found in Mesomycoplasma hyopneumoniae (strain J / ATCC 25934 / NCTC 10110) (Mycoplasma hyopneumoniae).